The sequence spans 242 residues: Ribonuclease 3 (242 aa).

The region spanning Leu-7–Gly-136 is the RNase III domain. A Mg(2+)-binding site is contributed by Glu-49. The active site involves Asp-53. Mg(2+)-binding residues include Asp-122 and Glu-125. Residue Glu-125 is part of the active site. Positions Asp-167–Ala-236 constitute a DRBM domain.

The protein belongs to the ribonuclease III family. Homodimer. The cofactor is Mg(2+).

It localises to the cytoplasm. The enzyme catalyses Endonucleolytic cleavage to 5'-phosphomonoester.. Functionally, digests double-stranded RNA. Involved in the processing of primary rRNA transcript to yield the immediate precursors to the large and small rRNAs (23S and 16S). Processes some mRNAs, and tRNAs when they are encoded in the rRNA operon. Processes pre-crRNA and tracrRNA of type II CRISPR loci if present in the organism. The chain is Ribonuclease 3 from Syntrophobacter fumaroxidans (strain DSM 10017 / MPOB).